A 217-amino-acid polypeptide reads, in one-letter code: GrpE protein homolog 1, mitochondrial (217 aa).

The transit peptide at 1–27 (MAARCVRLARRSLPALALSFRPSPRLL) directs the protein to the mitochondrion. N6-acetyllysine; alternate is present on Lys94. N6-succinyllysine; alternate is present on Lys94. Residue Lys100 is modified to N6-acetyllysine. Lys120 carries the post-translational modification N6-succinyllysine. N6-acetyllysine; alternate is present on Lys215. Lys215 carries the N6-succinyllysine; alternate modification.

This sequence belongs to the GrpE family. Probable component of the PAM complex at least composed of a mitochondrial HSP70 protein, GRPEL1 or GRPEL2, TIMM44, TIMM16/PAM16 and TIMM14/DNAJC19. Binds to HSP70, HSC70 and HSJ1B. In terms of tissue distribution, ubiquitous. Particularly abundant in heart, kidney and liver.

It is found in the mitochondrion matrix. Essential component of the PAM complex, a complex required for the translocation of transit peptide-containing proteins from the inner membrane into the mitochondrial matrix in an ATP-dependent manner. Seems to control the nucleotide-dependent binding of mitochondrial HSP70 to substrate proteins. This chain is GrpE protein homolog 1, mitochondrial (Grpel1), found in Rattus norvegicus (Rat).